A 170-amino-acid chain; its full sequence is Thioredoxin-like protein YneN (170 aa).

The helical transmembrane segment at 5-23 (WLAGILLIMLVGYTGWNLY) threads the bilayer. The Thioredoxin domain maps to 33-170 (IQEGQQAPDF…KEMEQKLDLD (138 aa)). Cysteines 71 and 74 form a disulfide.

This sequence belongs to the thioredoxin family.

It is found in the cell membrane. This is Thioredoxin-like protein YneN (yneN) from Bacillus subtilis (strain 168).